The chain runs to 196 residues: Putative NADH dehydrogenase/NAD(P)H nitroreductase Smal_0358 (196 aa).

The protein belongs to the nitroreductase family. HadB/RutE subfamily. It depends on FMN as a cofactor.

In Stenotrophomonas maltophilia (strain R551-3), this protein is Putative NADH dehydrogenase/NAD(P)H nitroreductase Smal_0358.